The chain runs to 297 residues: Large ribosomal subunit protein uL18 (297 aa).

Belongs to the universal ribosomal protein uL18 family. As to quaternary structure, component of the large ribosomal subunit (LSU).

It localises to the cytoplasm. It is found in the nucleus. Its function is as follows. Component of the ribosome, a large ribonucleoprotein complex responsible for the synthesis of proteins in the cell. The small ribosomal subunit (SSU) binds messenger RNAs (mRNAs) and translates the encoded message by selecting cognate aminoacyl-transfer RNA (tRNA) molecules. The large subunit (LSU) contains the ribosomal catalytic site termed the peptidyl transferase center (PTC), which catalyzes the formation of peptide bonds, thereby polymerizing the amino acids delivered by tRNAs into a polypeptide chain. The nascent polypeptides leave the ribosome through a tunnel in the LSU and interact with protein factors that function in enzymatic processing, targeting, and the membrane insertion of nascent chains at the exit of the ribosomal tunnel. In Aedes aegypti (Yellowfever mosquito), this protein is Large ribosomal subunit protein uL18 (RpL5).